A 247-amino-acid polypeptide reads, in one-letter code: Protein AC124 (247 aa).

It is found in the host cytoplasm. It localises to the host nucleus. Functionally, accelerates mortality in insect larvae. The sequence is that of Protein AC124 from Lepidoptera (butterflies and moths).